The primary structure comprises 582 residues: Isopropyl malate synthase AMT7 (582 aa).

A Pyruvate carboxyltransferase domain is found at 61 to 341 (PVLFSTDLRD…EPGIDLSRLD (281 aa)).

This sequence belongs to the alpha-IPM synthase/homocitrate synthase family. LeuA type 2 subfamily.

The enzyme catalyses 3-methyl-2-oxobutanoate + acetyl-CoA + H2O = (2S)-2-isopropylmalate + CoA + H(+). It participates in mycotoxin biosynthesis. Functionally, isopropyl malate synthase; part of the gene clusters that mediate the biosynthesis of AM-toxins, host-selective toxins (HSTs) causing Alternaria blotch on apple, a worldwide distributed disease. AM-toxins are cyclic depsipeptides containing the 3 residues 2-hydroxy-isovaleric acid (2-HIV), dehydroalanine, L-alanine which are common for all 3 AM-toxins I to III. The fourth precursor is L-alpha-amino-methoxyphenyl-valeric acid (L-Amv) for AM-toxin I, L-alpha-amino-phenyl-valeric acid (L-Apv) for AM-toxin II, and L-alpha-amino-hydroxyphenyl-valeric acid (L-Ahv) for AM-toxin III. AM-toxins have two target sites for affecting susceptible apple cells; they cause invagination of the plasma membrane and electrolyte loss and chloroplast disorganization. The non-ribosomal peptide synthetase AMT1 contains 4 catalytic modules and is responsible for activation of each residue in AM-toxin. The aldo-keto reductase AMT2 catalyzes the conversion of 2-keto-isovaleric acid (2-KIV) to 2-hydroxy-isovaleric acid (2-HIV), one of the precursor residues incorporated by AMT1 during AM-toxin biosynthesis, by reduction of its ketone to an alcohol. The cytochrome P450 monooxygenase AMT3 and the thioesterase AMT4 are also important for AM-toxin production, but their exact function within the AM-toxin biosynthesis are not known yet. Up to 21 proteins (including AMT1 to AMT4) are predicted to be involved in AM-toxin biosynthesis since their expression ishighly up-regulated in AM-toxin-producing cultures. This is Isopropyl malate synthase AMT7 from Alternaria alternata (Alternaria rot fungus).